A 300-amino-acid polypeptide reads, in one-letter code: Glycine--tRNA ligase alpha subunit (300 aa).

It belongs to the class-II aminoacyl-tRNA synthetase family. As to quaternary structure, tetramer of two alpha and two beta subunits.

The protein localises to the cytoplasm. It carries out the reaction tRNA(Gly) + glycine + ATP = glycyl-tRNA(Gly) + AMP + diphosphate. The polypeptide is Glycine--tRNA ligase alpha subunit (glyQ) (Buchnera aphidicola subsp. Baizongia pistaciae (strain Bp)).